The primary structure comprises 104 residues: Replication restart protein PriB (104 aa).

Residues 1–101 enclose the SSB domain; the sequence is MTNRLELSGV…LHADHIEIIC (101 aa).

It belongs to the PriB family. Homodimer. Interacts with PriA and DnaT. Component of the replication restart primosome. Primosome assembly occurs via a 'hand-off' mechanism. PriA binds to replication forks, subsequently PriB then DnaT bind; DnaT then displaces ssDNA to generate the helicase loading substrate.

Its function is as follows. Involved in the restart of stalled replication forks, which reloads the replicative helicase on sites other than the origin of replication; the PriA-PriB pathway is the major replication restart pathway. During primosome assembly it facilitates complex formation between PriA and DnaT on DNA; stabilizes PriA on DNA. Stimulates the DNA unwinding activity of PriA helicase. In Photobacterium profundum (strain SS9), this protein is Replication restart protein PriB.